Reading from the N-terminus, the 300-residue chain is N-acetylmuramic acid 6-phosphate etherase 1 (300 aa).

Positions 57-220 (IATAFAQGGR…TTGAMIKSGK (164 aa)) constitute an SIS domain. Glutamate 85 acts as the Proton donor in catalysis. The active site involves glutamate 116.

Belongs to the GCKR-like family. MurNAc-6-P etherase subfamily. Homodimer.

It catalyses the reaction N-acetyl-D-muramate 6-phosphate + H2O = N-acetyl-D-glucosamine 6-phosphate + (R)-lactate. It participates in amino-sugar metabolism; 1,6-anhydro-N-acetylmuramate degradation. Its pathway is amino-sugar metabolism; N-acetylmuramate degradation. It functions in the pathway cell wall biogenesis; peptidoglycan recycling. Its function is as follows. Specifically catalyzes the cleavage of the D-lactyl ether substituent of MurNAc 6-phosphate, producing GlcNAc 6-phosphate and D-lactate. Together with AnmK, is also required for the utilization of anhydro-N-acetylmuramic acid (anhMurNAc) either imported from the medium or derived from its own cell wall murein, and thus plays a role in cell wall recycling. This chain is N-acetylmuramic acid 6-phosphate etherase 1, found in Vibrio cholerae serotype O1 (strain ATCC 39315 / El Tor Inaba N16961).